The primary structure comprises 152 residues: Avidin (152 aa).

The signal sequence occupies residues 1 to 24; sequence MVHATSPLLLLLLLSLALVAPGLS. One can recognise an Avidin-like domain in the interval 26–149; the sequence is RKCSLTGKWT…GINIFTRLRT (124 aa). The cysteines at positions 28 and 107 are disulfide-linked. N41 carries an N-linked (GlcNAc...) asparagine glycan. Y57 contacts biotin.

Belongs to the avidin/streptavidin family. As to quaternary structure, homotetramer. N-linked glycan at Asn-41 consists of GlcNAc(beta1-2)Man(alpha1-3)[GlcNAc(beta1-4)][Man(alpha1-?)Man(alpha1-6)] Man(beta1-4)GlcNAc(beta1-4)GlcNAc. Synthesized in hen oviduct and concentrated in egg white (where it represents 0.05% of the total protein).

It is found in the secreted. Its function is as follows. The biological function of avidin is not known. Forms a strong non-covalent specific complex with biotin (one molecule of biotin per subunit of avidin). This chain is Avidin (AVD), found in Gallus gallus (Chicken).